The primary structure comprises 385 residues: ELAV-like protein 4 (385 aa).

A disordered region spans residues 12–48; sequence TMEPQVSNGPTSNTSNGPSSNNRNCPSPMQTGAATDD. The span at 18-33 shows a compositional bias: low complexity; the sequence is SNGPTSNTSNGPSSNN. Polar residues predominate over residues 34–44; it reads RNCPSPMQTGA. Ser38 bears the Phosphoserine mark. 2 RRM domains span residues 51-129 and 137-217; these read TNLI…YARP and ANLY…FANN. A Phosphoserine modification is found at Ser233. Asymmetric dimethylarginine; by CARM1; alternate is present on Arg248. The residue at position 248 (Arg248) is an Omega-N-methylarginine; by CARM1; alternate. Positions 302–380 constitute an RRM 3 domain; sequence WCIFVYNLSP…RVLQVSFKTN (79 aa).

It belongs to the RRM elav family. As to quaternary structure, component of a TAU mRNP complex, at least composed of IGF2BP1, ELAVL4 and G3BP. Associates with the EIF4F cap-binding complex, composed of EIF4G, EIF4A, EIF4E and PABP. Within the EIF4F cap-binding complex, interacts with EIF4A. Interacts with SMN (via Tudor domain) in an RNA-independent manner; the interaction is required for localization of ELAVL4 to RNA granules. Interacts with MAP1 light chain LC1 (via C-terminus); the interaction contributes to the association of ELAVL4 with microtubules. Interacts with MAP1 light chain LC2. Methylated by CARM1, which leads to reduced RNA-binding activity and enhanced interaction with SMN. Methylation at Arg-248 by CARM1 weakens protective binding to the 3'UTR of CDKN1A mRNA and down-regulates CDKN1A protein expression, thereby maintaining cells in a proliferative state. Methylation is inhibited by NGF, which facilitates neurite outgrowth. In terms of tissue distribution, expressed in the brain, including the hippocampus, and in pancreatic beta cells (at protein level). Expressed in pyramidal neurons of the hippocampal CA3 and CA1 region and in the hilus but not in dentate granule cells (at protein level). Expressed in the dorsal root ganglion and the spinal cord (at protein level). Expressed in neural stem and progenitor cells (at protein level). Expressed in radial glia-like cells and in transient amplifying cells in the subventricular zone (SVZ), and in immature neurons both in the SVZ and the rostral migratory stream as well as in mature neurons in the olfactory bulb (at protein level). Expressed in testis and in the brain, including the hippocampus, the neocortex and the cerebellum. Expressed in lower- but not upper-layer primary neurons of the mature neocortex, in the hippocampal regions CA1-3 and the dentate gyrus. Expressed in the mitral and granule cells of the olfactory bulb, cerebral cortex, entorhinal cortex, thalamus, medial habenula, amygdala, granule cells of the cerebellum, pons, olivary nucleus, dorsal and ventral spinal cord and in dorsal root ganglia. Expressed in motor neurons. Isoform 4: Expressed in the brain. Isoform 5: Expressed in the brain. Isoform 6: Expressed in the brain. Isoform 7: Expressed in the brain. Isoform 8: Expressed in the brain. Isoform 9: Expressed in the brain. Isoform 10: Expressed in the brain. Isoform 11: Expressed in the brain.

The protein localises to the cytoplasm. It is found in the perikaryon. The protein resides in the cell projection. It localises to the dendrite. Its subcellular location is the axon. The protein localises to the growth cone. Functionally, RNA-binding protein that is involved in the post-transcriptional regulation of mRNAs. Plays a role in the regulation of mRNA stability, alternative splicing and translation. Binds to AU-rich element (ARE) sequences in the 3' untranslated region (3'UTR) of target mRNAs, including GAP43, VEGF, FOS, CDKN1A and ACHE mRNA. Many of the target mRNAs are coding for RNA-binding proteins, transcription factors and proteins involved in RNA processing and/or neuronal development and function. By binding to the mRNA 3'UTR, decreases mRNA deadenylation and thereby contributes to the stabilization of mRNA molecules and their protection from decay. Also binds to the polyadenylated (poly(A)) tail in the 3'UTR of mRNA, thereby increasing its affinity for mRNA binding. Mainly plays a role in neuron-specific RNA processing by stabilization of mRNAs such as GAP43, ACHE and mRNAs of other neuronal proteins, thereby contributing to the differentiation of neural progenitor cells, nervous system development, learning and memory mechanisms. Involved in the negative regulation of the proliferative activity of neuronal stem cells and in the positive regulation of neuronal differentiation of neural progenitor cells. Promotes neuronal differentiation of neural stem/progenitor cells in the adult subventricular zone of the hippocampus by binding to and stabilizing SATB1 mRNA. Binds and stabilizes MSI1 mRNA in neural stem cells. Exhibits increased binding to ACHE mRNA during neuronal differentiation, thereby stabilizing ACHE mRNA and enhancing its expression. Protects CDKN1A mRNA from decay by binding to its 3'-UTR. May bind to APP and BACE1 mRNAS and the BACE1AS lncRNA and enhance their stabilization. Plays a role in neurite outgrowth and in the establishment and maturation of dendritic arbors, thereby contributing to neocortical and hippocampal circuitry function. Stabilizes GAP43 mRNA and protects it from decay during postembryonic development in the brain. By promoting the stabilization of GAP43 mRNA, plays a role in NGF-mediated neurite outgrowth. Binds to BDNF long 3'UTR mRNA, thereby leading to its stabilization and increased dendritic translation after activation of PKC. By increasing translation of BDNF after nerve injury, may contribute to nerve regeneration. Acts as a stabilizing factor by binding to the 3'UTR of NOVA1 mRNA, thereby increasing its translation and enhancing its functional activity in neuron-specific splicing. Stimulates translation of mRNA in a poly(A)- and cap-dependent manner, possibly by associating with the EIF4F cap-binding complex. May also negatively regulate translation by binding to the 5'UTR of Ins2 mRNA, thereby repressing its translation. Upon glucose stimulation, Ins2 mRNA is released from ELAVL4 and translational inhibition is abolished. Also plays a role in the regulation of alternative splicing. May regulate alternative splicing of CALCA pre-mRNA into Calcitonin and Calcitonin gene-related peptide 1 (CGRP) by competing with splicing regulator TIAR for binding to U-rich sequences of CALCA pre-mRNA. The polypeptide is ELAV-like protein 4 (Elavl4) (Mus musculus (Mouse)).